A 416-amino-acid chain; its full sequence is D-amino acid dehydrogenase (416 aa).

3 to 17 (VIVLGAGIVGVTSAY) is a binding site for FAD.

Belongs to the DadA oxidoreductase family. FAD serves as cofactor.

It catalyses the reaction a D-alpha-amino acid + A + H2O = a 2-oxocarboxylate + AH2 + NH4(+). It participates in amino-acid degradation; D-alanine degradation; NH(3) and pyruvate from D-alanine: step 1/1. Its function is as follows. Oxidative deamination of D-amino acids. The chain is D-amino acid dehydrogenase from Rhizobium johnstonii (strain DSM 114642 / LMG 32736 / 3841) (Rhizobium leguminosarum bv. viciae).